The following is a 329-amino-acid chain: Phospho-N-acetylmuramoyl-pentapeptide-transferase (329 aa).

9 consecutive transmembrane segments (helical) span residues 1-21 (MLLN…IGIP), 53-73 (MGGF…ALVF), 76-96 (FSPA…IGFL), 109-129 (GLTA…SYFI), 141-161 (ILSW…IWLV), 175-195 (GLAS…AVVH), 198-218 (YDVL…FVFN), 237-257 (FLAI…IGAV), and 309-329 (IVFW…YFAF).

This sequence belongs to the glycosyltransferase 4 family. MraY subfamily. Mg(2+) is required as a cofactor.

The protein localises to the cell membrane. It carries out the reaction UDP-N-acetyl-alpha-D-muramoyl-L-alanyl-gamma-D-glutamyl-L-lysyl-D-alanyl-D-alanine + di-trans,octa-cis-undecaprenyl phosphate = Mur2Ac(oyl-L-Ala-gamma-D-Glu-L-Lys-D-Ala-D-Ala)-di-trans,octa-cis-undecaprenyl diphosphate + UMP. It participates in cell wall biogenesis; peptidoglycan biosynthesis. Functionally, catalyzes the initial step of the lipid cycle reactions in the biosynthesis of the cell wall peptidoglycan: transfers peptidoglycan precursor phospho-MurNAc-pentapeptide from UDP-MurNAc-pentapeptide onto the lipid carrier undecaprenyl phosphate, yielding undecaprenyl-pyrophosphoryl-MurNAc-pentapeptide, known as lipid I. The protein is Phospho-N-acetylmuramoyl-pentapeptide-transferase of Lactococcus lactis subsp. cremoris (strain SK11).